Here is a 299-residue protein sequence, read N- to C-terminus: Lipoyl synthase (299 aa).

[4Fe-4S] cluster contacts are provided by Cys34, Cys39, Cys45, Cys60, Cys64, Cys67, and Ser273. Residues 46–262 (WNKKHATVMI…KYVAYSKGFL (217 aa)) form the Radical SAM core domain.

Belongs to the radical SAM superfamily. Lipoyl synthase family. Requires [4Fe-4S] cluster as cofactor.

The protein localises to the cytoplasm. It carries out the reaction [[Fe-S] cluster scaffold protein carrying a second [4Fe-4S](2+) cluster] + N(6)-octanoyl-L-lysyl-[protein] + 2 oxidized [2Fe-2S]-[ferredoxin] + 2 S-adenosyl-L-methionine + 4 H(+) = [[Fe-S] cluster scaffold protein] + N(6)-[(R)-dihydrolipoyl]-L-lysyl-[protein] + 4 Fe(3+) + 2 hydrogen sulfide + 2 5'-deoxyadenosine + 2 L-methionine + 2 reduced [2Fe-2S]-[ferredoxin]. The protein operates within protein modification; protein lipoylation via endogenous pathway; protein N(6)-(lipoyl)lysine from octanoyl-[acyl-carrier-protein]: step 2/2. Its function is as follows. Catalyzes the radical-mediated insertion of two sulfur atoms into the C-6 and C-8 positions of the octanoyl moiety bound to the lipoyl domains of lipoate-dependent enzymes, thereby converting the octanoylated domains into lipoylated derivatives. The sequence is that of Lipoyl synthase from Ehrlichia canis (strain Jake).